Here is a 133-residue protein sequence, read N- to C-terminus: Large ribosomal subunit protein bL17 (133 aa).

It belongs to the bacterial ribosomal protein bL17 family. Part of the 50S ribosomal subunit. Contacts protein L32.

This chain is Large ribosomal subunit protein bL17, found in Nitratidesulfovibrio vulgaris (strain DSM 19637 / Miyazaki F) (Desulfovibrio vulgaris).